A 339-amino-acid chain; its full sequence is Anthranilate phosphoribosyltransferase (339 aa).

5-phospho-alpha-D-ribose 1-diphosphate is bound by residues Gly-79, 82-83, Thr-87, 89-92, 107-115, and Ser-119; these read GD, NVST, and KHGNRAVSS. Anthranilate is bound at residue Gly-79. Position 91 (Ser-91) interacts with Mg(2+). Asn-110 contacts anthranilate. An anthranilate-binding site is contributed by Arg-165. Mg(2+)-binding residues include Asp-224 and Glu-225.

This sequence belongs to the anthranilate phosphoribosyltransferase family. Homodimer. It depends on Mg(2+) as a cofactor.

The catalysed reaction is N-(5-phospho-beta-D-ribosyl)anthranilate + diphosphate = 5-phospho-alpha-D-ribose 1-diphosphate + anthranilate. Its pathway is amino-acid biosynthesis; L-tryptophan biosynthesis; L-tryptophan from chorismate: step 2/5. Its function is as follows. Catalyzes the transfer of the phosphoribosyl group of 5-phosphorylribose-1-pyrophosphate (PRPP) to anthranilate to yield N-(5'-phosphoribosyl)-anthranilate (PRA). This Geobacillus kaustophilus (strain HTA426) protein is Anthranilate phosphoribosyltransferase.